The primary structure comprises 554 residues: MDSVTNFFWNDTYNAGTPTRSTLKGKKVQNGIDGKSQAKKESISSGSRTSDPTRGSLPSSSGQPTSGGGFPSTSNIQKMMADTLVEKIIKMALPPSSKTAVDTIHHRMVAGKERPKLSVQITSRNFIQMNSRLGVPFMIMDELIKILNWTNPAYTVSIMFLYTLIILKPFQMLSSLPIFYLLFCVMVPQYLYIHKPNPTSYLDNNQTPAQGPPLRRPEVPKPVPELSQEFVLNLTDLQNHMLLYVKFYDFTLLILQKFAFFTNEAISSFYFIVLLIIATLNFLYMDKFIKLIPMRPVLILLGWGFFIASHPSNREYLLTKLNSEETRLKTLTISTNLESKILQHLKLIEAREHRLVMIFEIQKYLPEYKEWRPVGFSDDDYSLFSSLRIYQRRIEENSVKSLEEIEPPKDWEWEANSHWVLDLDPKEWVEDEFIQYVEIDSETKWVYDLNLDGQRGSYRRRMWTNSCVRKKLDSGISSNLGEEEVVNPLREETYRQGVHGVTKGSMSGGLTHSSDDDRADEESINGTIPNLNNIDADASYPSIEELTDTLNSTI.

The Cytoplasmic segment spans residues 1-145 (MDSVTNFFWN…PFMIMDELIK (145 aa)). 2 stretches are compositionally biased toward polar residues: residues 11–22 (DTYNAGTPTRST) and 43–53 (ISSGSRTSDPT). The segment at 11-73 (DTYNAGTPTR…PTSGGGFPST (63 aa)) is disordered. Over residues 55 to 64 (GSLPSSSGQP) the composition is skewed to low complexity. Residues 146-166 (ILNWTNPAYTVSIMFLYTLII) form a helical membrane-spanning segment. Over 167–172 (LKPFQM) the chain is Peroxisomal. Residues 173–193 (LSSLPIFYLLFCVMVPQYLYI) form a helical membrane-spanning segment. At 194-264 (HKPNPTSYLD…LQKFAFFTNE (71 aa)) the chain is on the cytoplasmic side. A helical membrane pass occupies residues 265–285 (AISSFYFIVLLIIATLNFLYM). The Peroxisomal portion of the chain corresponds to 286-287 (DK). The chain crosses the membrane as a helical span at residues 288 to 308 (FIKLIPMRPVLILLGWGFFIA). Residues 309-554 (SHPSNREYLL…ELTDTLNSTI (246 aa)) are Cytoplasmic-facing. The interval 500–532 (GVTKGSMSGGLTHSSDDDRADEESINGTIPNLN) is disordered.

Belongs to the PEX28-32 family. PEX29 subfamily.

It is found in the peroxisome membrane. Involved in the regulation of peroxisome number, size and distribution. This Saccharomyces cerevisiae (strain ATCC 204508 / S288c) (Baker's yeast) protein is Peroxisomal membrane protein PEX29 (PEX29).